The following is a 367-amino-acid chain: Riboflavin biosynthesis protein VVA0006 (367 aa).

215 to 219 (RLHSE) contributes to the GTP binding site. Residues cysteine 220, cysteine 231, and cysteine 233 each contribute to the Zn(2+) site. Residues glutamine 236, 258–260 (EGR), and threonine 280 contribute to the GTP site. Aspartate 292 acts as the Proton acceptor in catalysis. Arginine 294 (nucleophile) is an active-site residue. GTP-binding residues include threonine 315 and lysine 320.

The protein in the N-terminal section; belongs to the YbiA family. In the C-terminal section; belongs to the GTP cyclohydrolase II family. Requires Zn(2+) as cofactor.

It catalyses the reaction 2,5-diamino-6-hydroxy-4-(5-phosphoribosylamino)-pyrimidine + H2O = 2,5,6-triamino-4-hydroxypyrimidine + D-ribose 5-phosphate. The enzyme catalyses 5-amino-6-(5-phospho-D-ribosylamino)uracil + H2O = 5,6-diaminouracil + D-ribose 5-phosphate. It carries out the reaction GTP + 4 H2O = 2,5-diamino-6-hydroxy-4-(5-phosphoribosylamino)-pyrimidine + formate + 2 phosphate + 3 H(+). The protein operates within cofactor biosynthesis; riboflavin biosynthesis; 5-amino-6-(D-ribitylamino)uracil from GTP: step 1/4. Its function is as follows. Catalyzes the hydrolysis of the N-glycosidic bond in the first two intermediates of riboflavin biosynthesis, which are highly reactive metabolites, yielding relatively innocuous products. Thus, can divert a surplus of harmful intermediates into relatively harmless products and pre-empt the damage these intermediates would otherwise do. Has no activity against GTP, nucleoside monophosphates or ADP-ribose. In terms of biological role, catalyzes the conversion of GTP to 2,5-diamino-6-ribosylamino-4(3H)-pyrimidinone 5'-phosphate (DARP), formate and pyrophosphate. The protein is Riboflavin biosynthesis protein VVA0006 of Vibrio vulnificus (strain YJ016).